The primary structure comprises 461 residues: MTALFQQLPSVDKILKTSQGLQLITEFGHTAVVATCRELLTQARQFIKKNNQLPEYFSNFDRTFVEIHSRLQKQNQVQIKAVHNLTGTVLHTNLGRALWSEAAQQAALSVMQKNVSLEYDLDKGKRSHRDNYISELLCKLTGAEAACIVNNNAAAVLLMLATFAQGKEVIISRGELIEIGGAFRIPDIMEQAGCYLVEVGTTNRTHLKDYRNAITENTAFLMKVHSSNYQICGFTSSVSEEELAELGREMNVPVVTDLGSGALIDLSQYGLPKESTVQEKVAQGVGLVSFSGDKLLGGVQAGIIVGKKEWIEQLQAHPLKRALRCDKVILAGLEATLRLYLNPEKLTEKLPTLYLLTQPLKQLKINAMRLKERLESRLNSQFDIQIEASQAQIGSGSQPMERIPSVAVTIAEKTNVKLSALSARFKQLSQPIIGRMENGKIWLDLRSLAAIETLLNTLDEL.

Lys294 is modified (N6-(pyridoxal phosphate)lysine).

The protein belongs to the SelA family. Pyridoxal 5'-phosphate serves as cofactor.

The protein localises to the cytoplasm. It catalyses the reaction L-seryl-tRNA(Sec) + selenophosphate + H(+) = L-selenocysteinyl-tRNA(Sec) + phosphate. It functions in the pathway aminoacyl-tRNA biosynthesis; selenocysteinyl-tRNA(Sec) biosynthesis; selenocysteinyl-tRNA(Sec) from L-seryl-tRNA(Sec) (bacterial route): step 1/1. In terms of biological role, converts seryl-tRNA(Sec) to selenocysteinyl-tRNA(Sec) required for selenoprotein biosynthesis. In Haemophilus influenzae (strain 86-028NP), this protein is L-seryl-tRNA(Sec) selenium transferase.